A 667-amino-acid chain; its full sequence is UvrABC system protein B (667 aa).

A Helicase ATP-binding domain is found at 25 to 414 (TGLQRGDKHQ…GVVVEQIIRP (390 aa)). 38-45 (GVTGSGKT) provides a ligand contact to ATP. The short motif at 91 to 114 (YYDYYQPEAYVPTTDTFIEKDSSI) is the Beta-hairpin element. The Helicase C-terminal domain maps to 430-596 (QVDDLIHEIR…TVKKSLRSIL (167 aa)). Residues 624 to 659 (KNEIARVKEEMLAAAANLEFEKAAELRDRMLELDKL) form the UVR domain.

The protein belongs to the UvrB family. Forms a heterotetramer with UvrA during the search for lesions. Interacts with UvrC in an incision complex.

The protein resides in the cytoplasm. Functionally, the UvrABC repair system catalyzes the recognition and processing of DNA lesions. A damage recognition complex composed of 2 UvrA and 2 UvrB subunits scans DNA for abnormalities. Upon binding of the UvrA(2)B(2) complex to a putative damaged site, the DNA wraps around one UvrB monomer. DNA wrap is dependent on ATP binding by UvrB and probably causes local melting of the DNA helix, facilitating insertion of UvrB beta-hairpin between the DNA strands. Then UvrB probes one DNA strand for the presence of a lesion. If a lesion is found the UvrA subunits dissociate and the UvrB-DNA preincision complex is formed. This complex is subsequently bound by UvrC and the second UvrB is released. If no lesion is found, the DNA wraps around the other UvrB subunit that will check the other stand for damage. In Syntrophotalea carbinolica (strain DSM 2380 / NBRC 103641 / GraBd1) (Pelobacter carbinolicus), this protein is UvrABC system protein B.